The following is a 296-amino-acid chain: UDP-N-acetylenolpyruvoylglucosamine reductase (296 aa).

An FAD-binding PCMH-type domain is found at 19–203 (KVGGFAEYFS…LETTQKNLKK (185 aa)). Residue arginine 166 is part of the active site. The Proton donor role is filled by serine 217. The active site involves glutamate 287.

Belongs to the MurB family. The cofactor is FAD.

Its subcellular location is the cytoplasm. The enzyme catalyses UDP-N-acetyl-alpha-D-muramate + NADP(+) = UDP-N-acetyl-3-O-(1-carboxyvinyl)-alpha-D-glucosamine + NADPH + H(+). It participates in cell wall biogenesis; peptidoglycan biosynthesis. In terms of biological role, cell wall formation. This chain is UDP-N-acetylenolpyruvoylglucosamine reductase, found in Prochlorococcus marinus subsp. pastoris (strain CCMP1986 / NIES-2087 / MED4).